The chain runs to 35 residues: Water stress-responsive protein 7 (35 aa).

The polypeptide is Water stress-responsive protein 7 (Pinus pinaster (Maritime pine)).